The chain runs to 401 residues: MNKWLCCALLVFLDIIEWTTQETFPPKYLHYDPETGRQLLCDKCAPGTYLKQHCTVRRKTLCVPCPDYSYTDSWHTSDECVYCSPVCKELQTVKQECNRTHNRVCECEEGRYLELEFCLKHRSCPPGLGVLQAGTPERNTVCKRCPDGFFSGETSSKAPCRKHTNCSSLGLLLIQKGNATHDNVCSGNREATQNCGIDVTLCEEAFFRFAVPTKIIPNWLSVLVDSLPGTKVNAESVERIKRRHSSQEQTFQLLKLWKHQNRDQEMVKKIIQDIDLCESSVQRHIGHANLTTEQLRILMESLPGKKISPDEIERTRKTCKPSEQLLKLLSLWRIKNGDQDTLKGLMYALKHLKAYHFPKTVTHSLRKTIRFLHSFTMYRLYQKLFLEMIGNQVQSVKISCL.

The N-terminal stretch at 1–21 (MNKWLCCALLVFLDIIEWTTQ) is a signal peptide. TNFR-Cys repeat units follow at residues 24–62 (FPPK…KTLC), 65–105 (CPDY…NRVC), 107–142 (CEEG…NTVC), and 145–185 (CPDG…DNVC). Disulfide bonds link cysteine 41–cysteine 54, cysteine 44–cysteine 62, cysteine 65–cysteine 80, cysteine 83–cysteine 97, cysteine 87–cysteine 105, cysteine 107–cysteine 118, cysteine 124–cysteine 142, and cysteine 145–cysteine 160. Asparagine 98 carries an N-linked (GlcNAc...) asparagine glycan. N-linked (GlcNAc...) asparagine glycans are attached at residues asparagine 165 and asparagine 178. Cysteine 166 and cysteine 185 are joined by a disulfide. Death domains are found at residues 198 to 269 (DVTL…MVKK) and 270 to 365 (IIQD…THSL). The N-linked (GlcNAc...) asparagine glycan is linked to asparagine 289.

As to quaternary structure, homodimer. Interacts with TNFSF10 and TNFSF11.

It localises to the secreted. Its function is as follows. Acts as a decoy receptor for TNFSF11/RANKL and thereby neutralizes its function in osteoclastogenesis. Inhibits the activation of osteoclasts and promotes osteoclast apoptosis in vitro. Bone homeostasis seems to depend on the local ratio between TNFSF11 and TNFRSF11B. May also play a role in preventing arterial calcification. May act as decoy receptor for TNFSF10/TRAIL and protect against apoptosis. TNFSF10/TRAIL binding blocks the inhibition of osteoclastogenesis. This is Tumor necrosis factor receptor superfamily member 11B (Tnfrsf11b) from Rattus norvegicus (Rat).